A 251-amino-acid chain; its full sequence is Ribosomal RNA small subunit methyltransferase G (251 aa).

Residues Gly-74, Phe-79, 125–126, and Arg-144 contribute to the S-adenosyl-L-methionine site; that span reads AE. The disordered stretch occupies residues 224 to 251; that stretch reads RPAGLPTQHPLGAIEGAPRVESEEPEEP.

This sequence belongs to the methyltransferase superfamily. RNA methyltransferase RsmG family.

The protein localises to the cytoplasm. In terms of biological role, specifically methylates the N7 position of a guanine in 16S rRNA. The chain is Ribosomal RNA small subunit methyltransferase G from Gloeobacter violaceus (strain ATCC 29082 / PCC 7421).